A 229-amino-acid polypeptide reads, in one-letter code: GTP:AMP phosphotransferase (229 aa).

Position 10–15 (G10–T15) interacts with a ribonucleoside 5'-triphosphate. The segment at N30–V59 is NMP. Residues R36, N57–V59, G87, G87–R90, and Q94 contribute to the AMP site. Residues G123–D170 form an LID region. An AMP-binding site is contributed by R178.

This sequence belongs to the adenylate kinase family.

The protein resides in the mitochondrion. The enzyme catalyses a ribonucleoside 5'-triphosphate + AMP = a ribonucleoside 5'-diphosphate + ADP. It catalyses the reaction GTP + AMP = GDP + ADP. Inhibited by the dinucleoside pentaphosphate compound P1,P5-di(guanosine-5') pentaphosphate (GP5A). In terms of biological role, catalyzes the reversible transfer of the terminal phosphate group between GTP and AMP. Has very low activity with UTP, ITP, CTP and IMP and no activity with ATP, GMP, CMP and UMP in vitro. In Plasmodium falciparum (isolate 3D7), this protein is GTP:AMP phosphotransferase.